A 164-amino-acid polypeptide reads, in one-letter code: Pathogenesis-related protein PRB1-2 (164 aa).

Residues 1 to 24 (MQTPKLAILLALAMAAAMVNLSQA) form the signal peptide. Q25 is subject to Pyrrolidone carboxylic acid. An SCP domain is found at 34–152 (PHNAARSAVG…NRGVFITCNY (119 aa)). 3 disulfide bridges follow: C68/C140, C113/C119, and C135/C150.

The protein belongs to the CRISP family.

Probably involved in the defense reaction of plants against pathogens. The polypeptide is Pathogenesis-related protein PRB1-2 (Hordeum vulgare (Barley)).